Here is a 213-residue protein sequence, read N- to C-terminus: Thiamine import ATP-binding protein ThiQ (213 aa).

The 212-residue stretch at 1 to 212 (MIELNVTFDY…EQGRIVADQL (212 aa)) folds into the ABC transporter domain. Residue 31–38 (GESGAGKS) participates in ATP binding.

This sequence belongs to the ABC transporter superfamily. Thiamine importer (TC 3.A.1.19.1) family. As to quaternary structure, the complex is composed of two ATP-binding proteins (ThiQ), two transmembrane proteins (ThiP) and a solute-binding protein (ThiB).

The protein resides in the cell inner membrane. The enzyme catalyses thiamine(out) + ATP + H2O = thiamine(in) + ADP + phosphate + H(+). In terms of biological role, part of the ABC transporter complex ThiBPQ involved in thiamine import. Responsible for energy coupling to the transport system. In Haemophilus ducreyi (strain 35000HP / ATCC 700724), this protein is Thiamine import ATP-binding protein ThiQ.